The sequence spans 445 residues: tRNA(Ile2) 2-agmatinylcytidine synthetase TiaS (445 aa).

The segment at residues 278-349 (VVVRGSVAEK…KDGLVLNAEY (72 aa)) is a DNA-binding region (OB).

The protein belongs to the TiaS family.

It is found in the cytoplasm. It carries out the reaction cytidine(34) in tRNA(Ile2) + agmatine + ATP + H2O = 2-agmatinylcytidine(34) in tRNA(Ile2) + AMP + 2 phosphate + 2 H(+). Functionally, ATP-dependent agmatine transferase that catalyzes the formation of 2-agmatinylcytidine (agm2C) at the wobble position (C34) of tRNA(Ile2), converting the codon specificity from AUG to AUA. This chain is tRNA(Ile2) 2-agmatinylcytidine synthetase TiaS, found in Thermofilum pendens (strain DSM 2475 / Hrk 5).